A 252-amino-acid chain; its full sequence is MFFWCACCLMVAWRVSASDAEHCPELPPVDNSIFVAKEVEGQILGTYVCIKGYHLVGKKTLFCNASKEWDNTTTECRLGHCPDPVLVNGEFSSSGPVNVSDKITFMCNDHYILKGSNRSQCLEDHTWAPPFPICKSRDCDPPGNPVHGYFEGNNFTLGSTISYYCEDRYYLVGVQEQQCVDGEWSSALPVCKLIQEAPKPECEKALLAFQESKNLCEAMENFMQQLKESGMTMEELKYSLELKKAELKAKLL.

Positions 1–17 are cleaved as a signal peptide; it reads MFFWCACCLMVAWRVSA. 3 Sushi domains span residues 21–78, 79–136, and 137–193; these read EHCP…ECRL, GHCP…ICKS, and RDCD…VCKL. 6 cysteine pairs are disulfide-bonded: C23–C63, C49–C76, C81–C121, C107–C134, C139–C179, and C165–C191. N64, N71, N98, N117, and N154 each carry an N-linked (GlcNAc...) asparagine glycan.

Disulfide-linked complex of alpha and beta chains of 3 possible sorts: a 570 kDa complex of 7 alpha chains and 1 beta chain, a 530 kDa homoheptamer of alpha chains or a 500 kDa complex of 6 alpha chains and 1 beta chain. The central body of the alpha chain homomer supports tentacles, each with the binding site for C4b at the end.

The protein localises to the secreted. Controls the classical pathway of complement activation. It binds as a cofactor to C3b/C4b inactivator (C3bINA), which then hydrolyzes the complement fragment C4b. It also accelerates the degradation of the C4bC2a complex (C3 convertase) by dissociating the complement fragment C2a. It also interacts with anticoagulant protein S and with serum amyloid P component. The beta chain binds protein S. This Homo sapiens (Human) protein is C4b-binding protein beta chain (C4BPB).